We begin with the raw amino-acid sequence, 336 residues long: F420-dependent glucose-6-phosphate dehydrogenase (336 aa).

Asp39 serves as a coordination point for coenzyme F420-(gamma-Glu)n. His40 acts as the Proton donor in catalysis. Residues Thr76 and 107–108 (TG) each bind coenzyme F420-(gamma-Glu)n. Residue Glu109 is the Proton acceptor of the active site. Coenzyme F420-(gamma-Glu)n contacts are provided by residues Asn112, 177 to 178 (GG), and 180 to 181 (QV). 4 residues coordinate substrate: Thr195, Lys198, Lys259, and Arg283.

Belongs to the F420-dependent glucose-6-phosphate dehydrogenase family. Homodimer.

It catalyses the reaction oxidized coenzyme F420-(gamma-L-Glu)(n) + D-glucose 6-phosphate + H(+) = 6-phospho-D-glucono-1,5-lactone + reduced coenzyme F420-(gamma-L-Glu)(n). Functionally, catalyzes the coenzyme F420-dependent oxidation of glucose 6-phosphate (G6P) to 6-phosphogluconolactone. Appears to have a role in resistance to oxidative stress, via its consumption of G6P that serves as a source of reducing power to combat oxidative stress in mycobacteria. The polypeptide is F420-dependent glucose-6-phosphate dehydrogenase (Mycolicibacterium gilvum (strain PYR-GCK) (Mycobacterium gilvum (strain PYR-GCK))).